The sequence spans 86 residues: Small ribosomal subunit protein uS15 (86 aa).

The segment at 1 to 22 (MSVDTQKVIEDNKRSAQDTGSP) is disordered. Over residues 7–16 (KVIEDNKRSA) the composition is skewed to basic and acidic residues.

The protein belongs to the universal ribosomal protein uS15 family. As to quaternary structure, part of the 30S ribosomal subunit. Forms a bridge to the 50S subunit in the 70S ribosome, contacting the 23S rRNA.

Functionally, one of the primary rRNA binding proteins, it binds directly to 16S rRNA where it helps nucleate assembly of the platform of the 30S subunit by binding and bridging several RNA helices of the 16S rRNA. Forms an intersubunit bridge (bridge B4) with the 23S rRNA of the 50S subunit in the ribosome. In Xanthomonas axonopodis pv. citri (strain 306), this protein is Small ribosomal subunit protein uS15.